The sequence spans 259 residues: 3-deoxy-manno-octulosonate cytidylyltransferase 1 (259 aa).

The protein belongs to the KdsB family.

Its subcellular location is the cytoplasm. The enzyme catalyses 3-deoxy-alpha-D-manno-oct-2-ulosonate + CTP = CMP-3-deoxy-beta-D-manno-octulosonate + diphosphate. It participates in nucleotide-sugar biosynthesis; CMP-3-deoxy-D-manno-octulosonate biosynthesis; CMP-3-deoxy-D-manno-octulosonate from 3-deoxy-D-manno-octulosonate and CTP: step 1/1. The protein operates within bacterial outer membrane biogenesis; lipopolysaccharide biosynthesis. Activates KDO (a required 8-carbon sugar) for incorporation into bacterial lipopolysaccharide in Gram-negative bacteria. This chain is 3-deoxy-manno-octulosonate cytidylyltransferase 1, found in Hydrogenovibrio crunogenus (strain DSM 25203 / XCL-2) (Thiomicrospira crunogena).